The sequence spans 932 residues: MYCBP-associated protein (932 aa).

Disordered regions lie at residues 1-39 and 165-187; these read MMKK…PVSN and EEPK…PPQH. Over residues 165 to 178 the composition is skewed to basic and acidic residues; sequence EEPKPKPPKEEERP. Phosphoserine is present on serine 559. Threonine 560 is modified (phosphothreonine). Position 566 is a phosphoserine (serine 566). Positions 789 to 886 are disordered; that stretch reads LPDEQGQKSP…TAPSQEPIDP (98 aa). A compositionally biased stretch (polar residues) spans 795-806; sequence QKSPPVTESKVT. The span at 810–869 shows a compositional bias: basic and acidic residues; that stretch reads AGKEDRRGGAQEKKQLGTKDKDDKRGSKTPGKEDRPNSKKLKPKDDKKVVKSASRDRLLS.

In terms of assembly, interacts with MYCBP.

It localises to the cytoplasm. It is found in the membrane. Functionally, may play a role in spermatogenesis. May be involved in synaptic processes. The polypeptide is MYCBP-associated protein (Mus musculus (Mouse)).